The following is a 411-amino-acid chain: Methyl-CpG-binding domain protein 2 (411 aa).

The tract at residues 1–149 is required for interaction with DHX9 and PRMT5; the sequence is MRAHPGGGRC…GPRATESGKR (149 aa). The interval 1-158 is disordered; it reads MRAHPGGGRC…RMDCPALPPG (158 aa). Residues 77-95 show a composition bias toward basic residues; it reads GRGRGRGRGRGRGRGRGRG. Gly residues predominate over residues 98-121; it reads PSGGSGLGGDGGGCGGGGSGGGGA. The region spanning 145 to 213 is the MBD domain; sequence ESGKRMDCPA…SSFDFRTGKM (69 aa). Serine 181 bears the Phosphoserine mark. The interval 214-241 is disordered; sequence MPSKLQKNKQRLRNDPLNQNKGKPDLNT. The segment covering 229–241 has biased composition (polar residues); that stretch reads PLNQNKGKPDLNT. At serine 407 the chain carries Phosphoserine.

In terms of assembly, heterodimer with MBD3 (via N-terminus). Component of the MeCP1 complex that contains HDAC1 and HDAC2. Component of the nucleosome remodeling and deacetylase (NuRD) repressor complex, composed of core proteins MTA1, MTA2, MTA3, RBBP4, RBBP7, HDAC1, HDAC2, MBD2, MBD3, and peripherally associated proteins CDK2AP1, CDK2AP2, GATAD2A, GATAD2B, CHD3, CHD4 and CHD5. The exact stoichiometry of the NuRD complex is unknown, and some subunits such as MBD2 and MBD3, GATAD2A and GATAD2B, and CHD3, CHD4 and CHD5 define mutually exclusive NuRD complexes. Interacts with CDK2AP1. Interacts with DHX9. Interacts with DNMT1. Interacts with GATAD2A/p66-alpha. Interacts with GATAD2B/p66-beta. Interacts with GPN1. Interacts with MIZF. Interacts with PRMT5. Interacts with SIN3A. Interacts with SPHK2. Highly expressed in brain, heart, kidney, stomach, testis and placenta.

Its subcellular location is the nucleus. The protein localises to the chromosome. Functionally, binds CpG islands in promoters where the DNA is methylated at position 5 of cytosine within CpG dinucleotides. Binds hemimethylated DNA as well. Recruits histone deacetylases and DNA methyltransferases to chromatin. Acts as a component of the histone deacetylase NuRD complex which participates in the remodeling of chromatin. Acts as a transcriptional repressor and plays a role in gene silencing. Functions as a scaffold protein, targeting GATAD2A and GATAD2B to chromatin to promote repression. May enhance the activation of some unmethylated cAMP-responsive promoters. This Homo sapiens (Human) protein is Methyl-CpG-binding domain protein 2.